Here is a 542-residue protein sequence, read N- to C-terminus: GMP synthase [glutamine-hydrolyzing] (542 aa).

Residues 28–218 form the Glutamine amidotransferase type-1 domain; the sequence is MLVILDFGSQ…VYHICQCEPT (191 aa). Cys105 serves as the catalytic Nucleophile. Catalysis depends on residues His192 and Glu194. Residues 219–417 form the GMPS ATP-PPase domain; that stretch reads WTTEAFVEES…IGLPEEIVRR (199 aa). Residue 246–252 coordinates ATP; the sequence is SGGVDSS.

In terms of assembly, homodimer.

The enzyme catalyses XMP + L-glutamine + ATP + H2O = GMP + L-glutamate + AMP + diphosphate + 2 H(+). It functions in the pathway purine metabolism; GMP biosynthesis; GMP from XMP (L-Gln route): step 1/1. Catalyzes the synthesis of GMP from XMP. In Rippkaea orientalis (strain PCC 8801 / RF-1) (Cyanothece sp. (strain PCC 8801)), this protein is GMP synthase [glutamine-hydrolyzing].